Reading from the N-terminus, the 170-residue chain is UPF0161 protein At3g09310 (170 aa).

Disordered stretches follow at residues 49 to 70 (CLSA…GEEL) and 147 to 170 (SGIK…QRKI). A compositionally biased stretch (acidic residues) spans 154–170 (GDEEEEDNYDDEDQRKI).

The protein belongs to the UPF0161 family.

This Arabidopsis thaliana (Mouse-ear cress) protein is UPF0161 protein At3g09310.